Consider the following 283-residue polypeptide: 2-dehydro-3-deoxyphosphooctonate aldolase (283 aa).

The protein belongs to the KdsA family.

The protein resides in the cytoplasm. The catalysed reaction is D-arabinose 5-phosphate + phosphoenolpyruvate + H2O = 3-deoxy-alpha-D-manno-2-octulosonate-8-phosphate + phosphate. The protein operates within carbohydrate biosynthesis; 3-deoxy-D-manno-octulosonate biosynthesis; 3-deoxy-D-manno-octulosonate from D-ribulose 5-phosphate: step 2/3. It functions in the pathway bacterial outer membrane biogenesis; lipopolysaccharide biosynthesis. The protein is 2-dehydro-3-deoxyphosphooctonate aldolase of Methylococcus capsulatus (strain ATCC 33009 / NCIMB 11132 / Bath).